A 148-amino-acid polypeptide reads, in one-letter code: Succinate dehydrogenase assembly factor 3, mitochondrial (148 aa).

Residues 1-12 constitute a mitochondrion transit peptide; the sequence is MYALRPTLRRSA. The segment at 129-148 is disordered; that stretch reads RGTEGDLEDGDGGESGQKSQ.

This sequence belongs to the complex I LYR family. SDHAF3 subfamily. Interacts with the iron-sulfur protein subunit within the SDH catalytic dimer.

Its subcellular location is the mitochondrion matrix. In terms of biological role, plays an essential role in the assembly of succinate dehydrogenase (SDH), an enzyme complex (also referred to as respiratory complex II) that is a component of both the tricarboxylic acid (TCA) cycle and the mitochondrial electron transport chain, and which couples the oxidation of succinate to fumarate with the reduction of ubiquinone (coenzyme Q) to ubiquinol. Promotes maturation of the iron-sulfur protein subunit of the SDH catalytic dimer, protecting it from the deleterious effects of oxidants. May act together with SDHAF1. The protein is Succinate dehydrogenase assembly factor 3, mitochondrial of Neurospora crassa (strain ATCC 24698 / 74-OR23-1A / CBS 708.71 / DSM 1257 / FGSC 987).